The primary structure comprises 1161 residues: Voltage-gated inwardly rectifying potassium channel KCNH2 (1161 aa).

At 1 to 405 (MPVRRGHVAP…RIHRWTILHY (405 aa)) the chain is on the cytoplasmic side. The 72-residue stretch at 17 to 88 (TIIRKFEGQS…AAQIAQALLG (72 aa)) folds into the PAS domain. The PAC domain occupies 92–144 (RKVEIAFYRKDGSCFLCLVDVVPVKNEDGAVIMFILNFEVVMEKDMVGSPARD). The disordered stretch occupies residues 233-286 (ALVGSCSPPPPVSAPGPHPSLRAHSLNPDASGSSCSLARTRSRESCASVRRASS). Residues S239 and S245 each carry the phosphoserine modification. The span at 239-250 (SPPPPVSAPGPH) shows a compositional bias: pro residues. Positions 260–271 (PDASGSSCSLAR) are enriched in polar residues. 4 positions are modified to phosphoserine: S285, S286, S322, and S353. A helical membrane pass occupies residues 406-426 (SPFKAVWDWLILLLVIYTAVF). Residues 427–452 (TPYSAAFLLKETEEGPPAPECGYACQ) lie on the Extracellular side of the membrane. Residues 453-473 (PLAVVDLIVDIMFIVDILINF) traverse the membrane as a helical segment. Residues 474–497 (RTTYVNANEEVVSHPGRIAVHYFK) are Cytoplasmic-facing. The chain crosses the membrane as a helical span at residues 498-518 (GWFLIDMVAAIPFDLLIFGSG). Over 519–522 (SEEL) the chain is Extracellular. The helical; Voltage-sensor transmembrane segment at 523–543 (IGLLKTARLLRLVRVARKLDR) threads the bilayer. At 544–549 (YSEYGA) the chain is on the cytoplasmic side. A helical transmembrane segment spans residues 550 to 570 (AVLLLLMCTFALIAHWLACIW). Topologically, residues 571–613 (YAIGNMEQPHMDSRIGWLHNLGDQMGKPYNSSGLGGPSIKDKY) are extracellular. N600 is a glycosylation site (N-linked (GlcNAc...) asparagine). The pore-forming intramembrane region spans 614 to 634 (VTGLYFTFSSLTSVGFGNVSP). The Selectivity filter signature appears at 626-631 (SVGFGN). Over 635–640 (NTNSEK) the chain is Extracellular. A helical transmembrane segment spans residues 641–661 (IFSICVMLIGSLMYASIFGNV). Over 662–1161 (SAIIQRLYSG…LHRHGSDPGS (500 aa)) the chain is Cytoplasmic. The segment at 744-844 (PFRGATKDCL…IHRDDLLEVL (101 aa)) is cNMP-binding domain. Positions 872-985 (GSPGSTEWEG…TEDCEKSSDT (114 aa)) are disordered. Phosphoserine is present on residues S873 and S876. Residues 885–894 (RQRKRKLSFR) are compositionally biased toward basic residues. Residues 930 to 941 (GESPSSGPSSPE) are compositionally biased toward low complexity. Pro residues predominate over residues 962–972 (SPRPPGEPPGG). R1016 is subject to Omega-N-methylarginine. Residues 1037 to 1064 (RGDVESRLDALQRQLNRLETRLSADMAT) adopt a coiled-coil conformation. A disordered region spans residues 1121–1161 (ELPPGAPELPQEGPTRRLSLPGQLGALTSQPLHRHGSDPGS). S1139 is modified (phosphoserine).

This sequence belongs to the potassium channel family. H (Eag) (TC 1.A.1.20) subfamily. Kv11.1/KCNH2 sub-subfamily. As to quaternary structure, the potassium channel is probably composed of a homo- or heterotetrameric complex of pore-forming alpha subunits that can associate with modulating beta subunits. Interacts with DNAJB12 and DNAJB14; chaperones DNAJB12 and DNAJB14 promote tetramerization. Heteromultimer with KCNH6/ERG2 and KCNH7/ERG3. Interacts with ALG10B. Forms a stable complex with KCNE1 or KCNE2, and that this heteromultimerization regulates Inward rectifier potassium channel activity. Interacts with CANX. The core-glycosylated, but not the fully glycosylated form interacts with RNF207. Interacts with NDFIP1 and NDFIP2; this interaction decreases the cell membrane expression by targeting KCNH2, through interaction with NEDD4L, for the degradation through the multivesicular bodies (MVBs)-lysosomal pathway. Phosphorylated on serine and threonine residues. Phosphorylation by PKA inhibits ion conduction. Detected in heart, both in atrium and in left ventricle.

Its subcellular location is the cell membrane. It catalyses the reaction K(+)(in) = K(+)(out). Its function is as follows. Pore-forming (alpha) subunit of voltage-gated inwardly rectifying potassium channel. Characterized by unusual gating kinetics by producing relatively small outward currents during membrane depolarization and large inward currents during subsequent repolarization which reflect a rapid inactivation during depolarization and quick recovery from inactivation but slow deactivation (closing) during repolarization. Channel properties are modulated by cAMP and subunit assembly. Forms a stable complex with KCNE1 or KCNE2, and that this heteromultimerization regulates inward rectifier potassium channel activity. The polypeptide is Voltage-gated inwardly rectifying potassium channel KCNH2 (Oryctolagus cuniculus (Rabbit)).